Consider the following 304-residue polypeptide: tRNA pseudouridine synthase B (304 aa).

D41 functions as the Nucleophile in the catalytic mechanism.

This sequence belongs to the pseudouridine synthase TruB family. Type 1 subfamily.

The enzyme catalyses uridine(55) in tRNA = pseudouridine(55) in tRNA. Functionally, responsible for synthesis of pseudouridine from uracil-55 in the psi GC loop of transfer RNAs. The protein is tRNA pseudouridine synthase B of Nitratidesulfovibrio vulgaris (strain ATCC 29579 / DSM 644 / CCUG 34227 / NCIMB 8303 / VKM B-1760 / Hildenborough) (Desulfovibrio vulgaris).